Reading from the N-terminus, the 316-residue chain is HPr kinase/phosphorylase (316 aa).

Catalysis depends on residues H143 and K164. G158–S165 serves as a coordination point for ATP. A Mg(2+)-binding site is contributed by S165. The active-site Proton acceptor; for phosphorylation activity. Proton donor; for dephosphorylation activity is the D182. The interval L206–N215 is important for the catalytic mechanism of both phosphorylation and dephosphorylation. E207 serves as a coordination point for Mg(2+). R251 is an active-site residue. The segment at P272–R277 is important for the catalytic mechanism of dephosphorylation.

It belongs to the HPrK/P family. As to quaternary structure, homohexamer. Requires Mg(2+) as cofactor.

It carries out the reaction [HPr protein]-L-serine + ATP = [HPr protein]-O-phospho-L-serine + ADP + H(+). The enzyme catalyses [HPr protein]-O-phospho-L-serine + phosphate + H(+) = [HPr protein]-L-serine + diphosphate. Catalyzes the ATP- as well as the pyrophosphate-dependent phosphorylation of a specific serine residue in HPr, a phosphocarrier protein of the phosphoenolpyruvate-dependent sugar phosphotransferase system (PTS). HprK/P also catalyzes the pyrophosphate-producing, inorganic phosphate-dependent dephosphorylation (phosphorolysis) of seryl-phosphorylated HPr (P-Ser-HPr). The sequence is that of HPr kinase/phosphorylase from Stenotrophomonas maltophilia (strain K279a).